The sequence spans 486 residues: D-mannonate oxidoreductase (486 aa).

25-36 (IVHLGCGAFHRA) lines the NAD(+) pocket.

Belongs to the mannitol dehydrogenase family. UxuB subfamily.

It carries out the reaction D-mannonate + NAD(+) = keto-D-fructuronate + NADH + H(+). Its pathway is carbohydrate metabolism; pentose and glucuronate interconversion. This chain is D-mannonate oxidoreductase (uxuB), found in Escherichia coli (strain K12).